The following is a 29-amino-acid chain: Varv peptide E (29 aa).

The cyclopeptide (Gly-Asn) cross-link spans 1-29; that stretch reads GLPICGETCVGGTCNTPGCSCSWPVCTRN. Disulfide bonds link C5-C19, C9-C21, and C14-C26.

This is a cyclic peptide.

Probably participates in a plant defense mechanism. Has cytotoxic activity against human lymphoma U-937 GTB and human myeloma RPMI-8226/s cell lines. The chain is Varv peptide E from Viola arvensis (European field pansy).